The sequence spans 150 residues: MLGAALRRCAVAATAWAGPRGLLHSAPTPGPAAAIHSVRCYSHGSSETDEEFDARWVTXFNKPDIDAWELRKGINTLVTYDLVPEPKIIDAALRACRRLNDFASTVRILEAVKDKAGPHKEIYPYVIQELRPTLNELGISTPEELGLDKV.

Residues 1-41 (MLGAALRRCAVAATAWAGPRGLLHSAPTPGPAAAIHSVRCY) constitute a mitochondrion transit peptide. The short motif at 2 to 17 (LGAALRRCAVAATAWA) is the SIFI-degron element. An N6-acetyllysine mark is found at Lys-87 and Lys-113. Position 141 is a phosphothreonine (Thr-141).

Belongs to the cytochrome c oxidase subunit 5A family. Component of the cytochrome c oxidase (complex IV, CIV), a multisubunit enzyme composed of 14 subunits. The complex is composed of a catalytic core of 3 subunits MT-CO1, MT-CO2 and MT-CO3, encoded in the mitochondrial DNA, and 11 supernumerary subunits COX4I, COX5A, COX5B, COX6A, COX6B, COX6C, COX7A, COX7B, COX7C, COX8 and NDUFA4, which are encoded in the nuclear genome. The complex exists as a monomer or a dimer and forms supercomplexes (SCs) in the inner mitochondrial membrane with NADH-ubiquinone oxidoreductase (complex I, CI) and ubiquinol-cytochrome c oxidoreductase (cytochrome b-c1 complex, complex III, CIII), resulting in different assemblies (supercomplex SCI(1)III(2)IV(1) and megacomplex MCI(2)III(2)IV(2)). Interacts with AFG1L. Interacts with RAB5IF. Post-translationally, in response to mitochondrial stress, the precursor protein is ubiquitinated by the SIFI complex in the cytoplasm before mitochondrial import, leading to its degradation. Within the SIFI complex, UBR4 initiates ubiquitin chain that are further elongated or branched by KCMF1.

It is found in the mitochondrion inner membrane. The protein operates within energy metabolism; oxidative phosphorylation. Its function is as follows. Component of the cytochrome c oxidase, the last enzyme in the mitochondrial electron transport chain which drives oxidative phosphorylation. The respiratory chain contains 3 multisubunit complexes succinate dehydrogenase (complex II, CII), ubiquinol-cytochrome c oxidoreductase (cytochrome b-c1 complex, complex III, CIII) and cytochrome c oxidase (complex IV, CIV), that cooperate to transfer electrons derived from NADH and succinate to molecular oxygen, creating an electrochemical gradient over the inner membrane that drives transmembrane transport and the ATP synthase. Cytochrome c oxidase is the component of the respiratory chain that catalyzes the reduction of oxygen to water. Electrons originating from reduced cytochrome c in the intermembrane space (IMS) are transferred via the dinuclear copper A center (CU(A)) of subunit 2 and heme A of subunit 1 to the active site in subunit 1, a binuclear center (BNC) formed by heme A3 and copper B (CU(B)). The BNC reduces molecular oxygen to 2 water molecules using 4 electrons from cytochrome c in the IMS and 4 protons from the mitochondrial matrix. This is Cytochrome c oxidase subunit 5A, mitochondrial (COX5A) from Saimiri sciureus (Common squirrel monkey).